We begin with the raw amino-acid sequence, 393 residues long: MTRIGTPLSPSATRVLLCGSGELGKEVAIELQRLGCEVIAVDRYGNAPAMQVAHRSHVISMLDGAALRAVIEQEKPHYIVPEIEAIATATLVELEAEGYTVVPTARAAQLTMNREGIRRLAAEELGLPTSPYHFADTFEDYRRGVERVGYPCVVKPIMSSSGKGQSVLKGPDDLQAAWDYAQEGGRAGKGRVIVEGFIDFDYEITLLTVRHVDGTTFCAPIGHRQVKGDYHESWQPQAMSAQALAESERVARAVTEALGGRGLFGVELFVKGDQVWFSEVSPRPHDTGLVTLISQDLSEFALHARAILGLPIPVIRQLGPSASAVILVEGKSRQVAFANLGAALSEADTALRLFGKPEVDGQRRMGVALARDESIDAARAKATRAAQAVRVEL.

N(1)-(5-phospho-beta-D-ribosyl)glycinamide contacts are provided by residues 22-23 (EL) and Glu-82. ATP is bound by residues Arg-114, Lys-155, 160–165 (SSGKGQ), 195–198 (EGFI), and Glu-203. The ATP-grasp domain maps to 119–308 (RLAAEELGLP…EFALHARAIL (190 aa)). Glu-267 and Glu-279 together coordinate Mg(2+). Residues Asp-286, Lys-356, and 363–364 (RR) each bind N(1)-(5-phospho-beta-D-ribosyl)glycinamide.

Belongs to the PurK/PurT family. In terms of assembly, homodimer.

It catalyses the reaction N(1)-(5-phospho-beta-D-ribosyl)glycinamide + formate + ATP = N(2)-formyl-N(1)-(5-phospho-beta-D-ribosyl)glycinamide + ADP + phosphate + H(+). It functions in the pathway purine metabolism; IMP biosynthesis via de novo pathway; N(2)-formyl-N(1)-(5-phospho-D-ribosyl)glycinamide from N(1)-(5-phospho-D-ribosyl)glycinamide (formate route): step 1/1. Involved in the de novo purine biosynthesis. Catalyzes the transfer of formate to 5-phospho-ribosyl-glycinamide (GAR), producing 5-phospho-ribosyl-N-formylglycinamide (FGAR). Formate is provided by PurU via hydrolysis of 10-formyl-tetrahydrofolate. This chain is Formate-dependent phosphoribosylglycinamide formyltransferase, found in Pseudomonas aeruginosa (strain LESB58).